We begin with the raw amino-acid sequence, 72 residues long: SRY-related protein AES4 (72 aa).

A DNA-binding region (HMG box) is located at residues 1–69 (VKRPMNAFMV…KHMADYPDYK (69 aa)).

It localises to the nucleus. This is SRY-related protein AES4 from Alligator mississippiensis (American alligator).